Consider the following 379-residue polypeptide: L-lactate dehydrogenase (379 aa).

An FMN hydroxy acid dehydrogenase domain is found at Met1–Arg379. Tyr24 contributes to the substrate binding site. The FMN site is built by Ser106 and Gln127. A substrate-binding site is contributed by Tyr129. Thr155 contributes to the FMN binding site. A substrate-binding site is contributed by Arg164. Lys251 is an FMN binding site. The Proton acceptor role is filled by His275. Arg278 is a substrate binding site. Asp306–Arg330 provides a ligand contact to FMN.

It belongs to the FMN-dependent alpha-hydroxy acid dehydrogenase family. Homotetramer. The cofactor is FMN.

The protein resides in the cell inner membrane. The enzyme catalyses (S)-lactate + A = pyruvate + AH2. In terms of biological role, catalyzes the conversion of L-lactate to pyruvate. Is coupled to the respiratory chain. The sequence is that of L-lactate dehydrogenase from Ectopseudomonas mendocina (strain ymp) (Pseudomonas mendocina).